Reading from the N-terminus, the 456-residue chain is tRNA-2-methylthio-N(6)-dimethylallyladenosine synthase (456 aa).

The 118-residue stretch at 2 to 119 folds into the MTTase N-terminal domain; that stretch reads KKVFIKTYGC…LPDLIAARRR (118 aa). Residues Cys11, Cys48, Cys82, Cys156, Cys160, and Cys163 each coordinate [4Fe-4S] cluster. The Radical SAM core domain maps to 142 to 375; it reads RVDGASAYVS…QATIEENVAR (234 aa). Residues 378–448 form the TRAM domain; it reads QGMVGSVQRI…PHSLRGEVAE (71 aa).

This sequence belongs to the methylthiotransferase family. MiaB subfamily. As to quaternary structure, monomer. The cofactor is [4Fe-4S] cluster.

It is found in the cytoplasm. It carries out the reaction N(6)-dimethylallyladenosine(37) in tRNA + (sulfur carrier)-SH + AH2 + 2 S-adenosyl-L-methionine = 2-methylsulfanyl-N(6)-dimethylallyladenosine(37) in tRNA + (sulfur carrier)-H + 5'-deoxyadenosine + L-methionine + A + S-adenosyl-L-homocysteine + 2 H(+). Its function is as follows. Catalyzes the methylthiolation of N6-(dimethylallyl)adenosine (i(6)A), leading to the formation of 2-methylthio-N6-(dimethylallyl)adenosine (ms(2)i(6)A) at position 37 in tRNAs that read codons beginning with uridine. The polypeptide is tRNA-2-methylthio-N(6)-dimethylallyladenosine synthase (Ralstonia pickettii (strain 12J)).